The primary structure comprises 140 residues: Immunity protein RhsIC (140 aa).

Functionally, putative immunity protein component of a toxin-immunity protein module, which may function as a cellular contact-dependent growth inhibition (CDI) system. Blocks the toxic effects of expression of the C-terminus (residues 1519-1658) of cognate toxin RhsC in E.coli. The sequence is that of Immunity protein RhsIC (rhsIC) from Dickeya dadantii (strain 3937) (Erwinia chrysanthemi (strain 3937)).